A 201-amino-acid polypeptide reads, in one-letter code: NADH-quinone oxidoreductase subunit C (201 aa).

This sequence belongs to the complex I 30 kDa subunit family. NDH-1 is composed of 14 different subunits. Subunits NuoB, C, D, E, F, and G constitute the peripheral sector of the complex.

The protein resides in the cell inner membrane. The enzyme catalyses a quinone + NADH + 5 H(+)(in) = a quinol + NAD(+) + 4 H(+)(out). NDH-1 shuttles electrons from NADH, via FMN and iron-sulfur (Fe-S) centers, to quinones in the respiratory chain. The immediate electron acceptor for the enzyme in this species is believed to be ubiquinone. Couples the redox reaction to proton translocation (for every two electrons transferred, four hydrogen ions are translocated across the cytoplasmic membrane), and thus conserves the redox energy in a proton gradient. This Dechloromonas aromatica (strain RCB) protein is NADH-quinone oxidoreductase subunit C.